We begin with the raw amino-acid sequence, 326 residues long: Target of rapamycin complex subunit lst8 (326 aa).

WD repeat units follow at residues M1 to T37, H40 to N80, G83 to Q122, Q126 to L165, E168 to V207, A218 to E257, and T268 to S309.

Belongs to the WD repeat LST8 family. As to quaternary structure, part of the mechanistic target of rapamycin complex 1 (mTORC1) which contains MTOR, MLST8 and RPTOR. Component of the mechanistic target of rapamycin complex 2 (mTORC2), consisting in two heterotretramers composed of MTOR, MLST8, RICTOR and MAPKAP1/SIN1.

The protein resides in the lysosome membrane. It is found in the cytoplasm. Its function is as follows. Subunit of both mTORC1 and mTORC2, which regulates cell growth and survival in response to nutrient and hormonal signals. mTORC1 is activated in response to growth factors or amino acids. In response to nutrients, mTORC1 is recruited to the lysosome membrane and promotes protein, lipid and nucleotide synthesis by phosphorylating several substrates, such as ribosomal protein S6 kinase (RPS6KB1 and RPS6KB2) and EIF4EBP1 (4E-BP1). In the same time, it inhibits catabolic pathways by phosphorylating the autophagy initiation components ULK1 and ATG13, as well as transcription factor TFEB, a master regulators of lysosomal biogenesis and autophagy. The mTORC1 complex is inhibited in response to starvation and amino acid depletion. Within mTORC1, MLST8 interacts directly with MTOR and enhances its kinase activity. In nutrient-poor conditions, stabilizes the MTOR-RPTOR interaction and favors RPTOR-mediated inhibition of MTOR activity. As part of the mTORC2 complex, transduces signals from growth factors to pathways involved in proliferation, cytoskeletal organization, lipogenesis and anabolic output. mTORC2 is also activated by growth factors, but seems to be nutrient-insensitive. In response to growth factors, mTORC2 phosphorylates and activates AGC protein kinase family members, including AKT (AKT1, AKT2 and AKT3), PKC (PRKCA, PRKCB and PRKCE) and SGK1. mTORC2 functions upstream of Rho GTPases to regulate the actin cytoskeleton, probably by activating one or more Rho-type guanine nucleotide exchange factors. mTORC2 promotes the serum-induced formation of stress-fibers or F-actin. Within mTORC2, MLST8 acts as a bridge between MAPKAP1/SIN1 and MTOR. The protein is Target of rapamycin complex subunit lst8 (mlst8) of Danio rerio (Zebrafish).